Here is a 129-residue protein sequence, read N- to C-terminus: NADPH-dependent 7-cyano-7-deazaguanine reductase (129 aa).

Cysteine 43 functions as the Thioimide intermediate in the catalytic mechanism. The active-site Proton donor is the aspartate 50. Residues 65-67 (VEL) and 84-85 (HE) each bind substrate.

Belongs to the GTP cyclohydrolase I family. QueF type 1 subfamily.

Its subcellular location is the cytoplasm. The enzyme catalyses 7-aminomethyl-7-carbaguanine + 2 NADP(+) = 7-cyano-7-deazaguanine + 2 NADPH + 3 H(+). It functions in the pathway tRNA modification; tRNA-queuosine biosynthesis. Its function is as follows. Catalyzes the NADPH-dependent reduction of 7-cyano-7-deazaguanine (preQ0) to 7-aminomethyl-7-deazaguanine (preQ1). This is NADPH-dependent 7-cyano-7-deazaguanine reductase from Aquifex aeolicus (strain VF5).